Here is a 100-residue protein sequence, read N- to C-terminus: Large ribosomal subunit protein uL23 (100 aa).

The protein belongs to the universal ribosomal protein uL23 family. Part of the 50S ribosomal subunit. Contacts protein L29, and trigger factor when it is bound to the ribosome.

One of the early assembly proteins it binds 23S rRNA. One of the proteins that surrounds the polypeptide exit tunnel on the outside of the ribosome. Forms the main docking site for trigger factor binding to the ribosome. The sequence is that of Large ribosomal subunit protein uL23 from Sodalis glossinidius (strain morsitans).